The chain runs to 387 residues: O-methyltransferase asqD (387 aa).

An S-adenosyl-L-methionine-binding site is contributed by Asp252. The Proton acceptor role is filled by His294.

It belongs to the class I-like SAM-binding methyltransferase superfamily. Cation-independent O-methyltransferase family.

It functions in the pathway secondary metabolite biosynthesis. Its pathway is alkaloid biosynthesis. It participates in mycotoxin biosynthesis. In terms of biological role, O-methyltransferase; part of the gene cluster that mediates the biosynthesis of the aspoquinolone mycotoxins. The role of asqD within the aspoquinolone pathway has still to be determined. The first step of the pathway is catalyzed by the nonribosomal peptide synthetase asqK that condenses anthranilic acid and O-methyl-L-tyrosine to produce 4'-methoxycyclopeptin. 4'-methoxycyclopeptin is then converted to 4'-methoxydehydrocyclopeptin by the ketoglutarate-dependent dioxygenase asqJ. AsqJ also converts its first product 4'-methoxydehydrocyclopeptin to 4'-methoxycyclopenin. The following conversion of 4'-methoxycyclopenin into 4'-methoxyviridicatin is catalyzed by the cyclopenase asqI. 4'-methoxyviridicatin is the precursor of quinolone natural products, and is further converted to quinolinone B. The prenyltransferase asqH1 then catalyzes the canonical Friedel-Crafts alkylation of quinolinone B with dimethylallyl cation to yield dimethylallyl quinolone, which is subjected to FAD-dependent dehydrogenation by the FAD-linked oxidoreductase asqF to yield conjugated aryl diene. The delta(3') double bond then serves as the site of the second alkylation with DMAPP catalyzed by the prenyltransferase asqH2 to yield a carbenium ion intermediate, which can be attacked by H(2)O to yield a styrenyl quinolone containing a C3'-hydroxyprenyl chain. The FAD-dependent monooxygenase asqG performs epoxidation of the terminal C7'-C8' olefin. Finally, after dehydratation of the epoxide at C3 by asqC, the quinolone epoxide rearrangement protein asqO catalyzes an enzymatic 3-exo-tet cyclization to yield the cyclopropyl-THF ring system in aspoquinolone. The chain is O-methyltransferase asqD from Emericella nidulans (strain FGSC A4 / ATCC 38163 / CBS 112.46 / NRRL 194 / M139) (Aspergillus nidulans).